Reading from the N-terminus, the 250-residue chain is 1-(5-phosphoribosyl)-5-[(5-phosphoribosylamino)methylideneamino] imidazole-4-carboxamide isomerase (250 aa).

The active-site Proton acceptor is Asp8. Asp131 (proton donor) is an active-site residue.

Belongs to the HisA/HisF family.

The protein localises to the cytoplasm. It catalyses the reaction 1-(5-phospho-beta-D-ribosyl)-5-[(5-phospho-beta-D-ribosylamino)methylideneamino]imidazole-4-carboxamide = 5-[(5-phospho-1-deoxy-D-ribulos-1-ylimino)methylamino]-1-(5-phospho-beta-D-ribosyl)imidazole-4-carboxamide. The protein operates within amino-acid biosynthesis; L-histidine biosynthesis; L-histidine from 5-phospho-alpha-D-ribose 1-diphosphate: step 4/9. The polypeptide is 1-(5-phosphoribosyl)-5-[(5-phosphoribosylamino)methylideneamino] imidazole-4-carboxamide isomerase (Paraburkholderia phytofirmans (strain DSM 17436 / LMG 22146 / PsJN) (Burkholderia phytofirmans)).